The following is a 458-amino-acid chain: Tyrosine phenol-lyase (458 aa).

At Lys-258 the chain carries N6-(pyridoxal phosphate)lysine.

The protein belongs to the beta-eliminating lyase family. In terms of assembly, homotetramer. It depends on pyridoxal 5'-phosphate as a cofactor.

The catalysed reaction is L-tyrosine + H2O = phenol + pyruvate + NH4(+). This chain is Tyrosine phenol-lyase (tpl), found in Symbiobacterium thermophilum (strain DSM 24528 / JCM 14929 / IAM 14863 / T).